The chain runs to 128 residues: MTRIKRGYIARRRRTKIRLFASSFRGAHSRLTRTITQQKIRALVSAHRDRDRKKRDFRRLWITRINAVIRERGVSYSYSRLIHDLYKRQLLLNRKILAQIAISNRNCLYMISNEIIKEVDWKESTRII.

The protein belongs to the bacterial ribosomal protein bL20 family.

The protein resides in the plastid. Its subcellular location is the chloroplast. Functionally, binds directly to 23S ribosomal RNA and is necessary for the in vitro assembly process of the 50S ribosomal subunit. It is not involved in the protein synthesizing functions of that subunit. The chain is Large ribosomal subunit protein bL20c from Nicotiana sylvestris (Wood tobacco).